We begin with the raw amino-acid sequence, 317 residues long: Transaldolase (317 aa).

The active-site Schiff-base intermediate with substrate is Lys-132.

The protein belongs to the transaldolase family. Type 1 subfamily.

It is found in the cytoplasm. It catalyses the reaction D-sedoheptulose 7-phosphate + D-glyceraldehyde 3-phosphate = D-erythrose 4-phosphate + beta-D-fructose 6-phosphate. Its pathway is carbohydrate degradation; pentose phosphate pathway; D-glyceraldehyde 3-phosphate and beta-D-fructose 6-phosphate from D-ribose 5-phosphate and D-xylulose 5-phosphate (non-oxidative stage): step 2/3. Transaldolase is important for the balance of metabolites in the pentose-phosphate pathway. The polypeptide is Transaldolase (Haemophilus influenzae (strain ATCC 51907 / DSM 11121 / KW20 / Rd)).